The chain runs to 721 residues: Dolichyl-diphosphooligosaccharide--protein glycosyltransferase subunit STT3B (721 aa).

Residues 1–25 (MAAATALDSLPAPLRSLRLKTKQQE) are Cytoplasmic-facing. Residues 26 to 46 (LLLRVSALALIYVLAFVVRLF) traverse the membrane as a helical segment. Over 47-129 (SVLRYESMIH…VHIREVCVLT (83 aa)) the chain is Lumenal. The DXD motif 1 motif lies at 57–59 (EFD). Asp-59 is a Mn(2+) binding site. A helical transmembrane segment spans residues 130-148 (APFFAANTTLVAYAFGREI). Topologically, residues 149 to 150 (WD) are cytoplasmic. Residues 151–168 (SGAGLVAAALIAVCPGYI) traverse the membrane as a helical segment. The Lumenal portion of the chain corresponds to 169 to 179 (SRSVAGSYDNE). Asp-177 and Glu-179 together coordinate Mn(2+). Residues 177–179 (DNE) carry the DXD motif 2 motif. Residues 180 to 199 (GVAIFALLLTFYLFVRAVNT) traverse the membrane as a helical segment. The Cytoplasmic portion of the chain corresponds to 200–201 (GS). A helical membrane pass occupies residues 202–216 (LAWSLASAFGYFYMV). The Lumenal portion of the chain corresponds to 217–221 (SAWGG). A helical membrane pass occupies residues 222 to 238 (YVFIINLLPLYVLVLLV). Residues 239–243 (TGRYS) are Cytoplasmic-facing. A helical membrane pass occupies residues 244-269 (QRLYVAYNSTYVLGMLLAMQIRFVGF). Residues 270–277 (QHVQSGEH) are Lumenal-facing. Residues 278-297 (MAAMGVFFLLQVFFFLDWVK) form a helical membrane-spanning segment. Topologically, residues 298–313 (YLLNDAKLFKSFLRIT) are cytoplasmic. Residues 314 to 334 (LTCVITVGTLALGIGTASGYI) traverse the membrane as a helical segment. Residues 335-367 (SPWTGRFYSLLDPTYAKDHIPIIASVSEHQPTA) lie on the Lumenal side of the membrane. The short motif at 359–362 (SVSE) is the SVSE motif element. The chain crosses the membrane as a helical span at residues 368–390 (WSSFMFDFHILLFLFPAGLYFCF). At 391 to 396 (KRLSDA) the chain is on the cytoplasmic side. A helical transmembrane segment spans residues 397–413 (TIFIVMYGLTSMYFAGV). The Lumenal portion of the chain corresponds to 414–417 (MVRL). Arg-416 is a dolichyl diphosphooligosaccharide binding site. The helical transmembrane segment at 418–439 (ILVAAPAVCLISAIAASATIKN) threads the bilayer. At 440-471 (LTTLIRTKSKSPQTVSGKSSGSKAAAKGAVDQ) the chain is on the cytoplasmic side. A helical membrane pass occupies residues 472–492 (SLPFQQNVAIALLLGAFYLLS). The Lumenal portion of the chain corresponds to 493 to 721 (RYAVHCTWVT…YKVKPPKNRS (229 aa)). The segment at 548 to 550 (WWD) is interacts with target acceptor peptide in protein substrate. A WWDYG motif motif is present at residues 548-552 (WWDYG). Residue Tyr-553 coordinates dolichyl diphosphooligosaccharide. Residues Asn-560 and Asn-567 are each glycosylated (N-linked (GlcNAc...) asparagine). Asn-571 carries N-linked (GlcNAc...) (high mannose) asparagine glycosylation. Positions 615-622 (DINKFLWM) match the DK motif motif.

It belongs to the STT3 family. As to quaternary structure, component of the oligosaccharyltransferase (OST) complex. It depends on Mg(2+) as a cofactor. The cofactor is Mn(2+).

It localises to the endoplasmic reticulum membrane. It carries out the reaction a di-trans,poly-cis-dolichyl diphosphooligosaccharide + L-asparaginyl-[protein] = N(4)-(oligosaccharide-(1-&gt;4)-N-acetyl-beta-D-glucosaminyl-(1-&gt;4)-N-acetyl-beta-D-glucosaminyl)-L-asparaginyl-[protein] + a di-trans,poly-cis-dolichyl diphosphate + H(+). It participates in protein modification; protein glycosylation. Functionally, catalytic subunit of the oligosaccharyl transferase (OST) complex that catalyzes the initial transfer of a defined glycan (Glc(3)Man(9)GlcNAc(2) in eukaryotes) from the lipid carrier dolichol-pyrophosphate to an asparagine residue within an Asn-X-Ser/Thr consensus motif in nascent polypeptide chains, the first step in protein N-glycosylation. N-glycosylation occurs cotranslationally and the complex associates with the Sec61 complex at the channel-forming translocon complex that mediates protein translocation across the endoplasmic reticulum (ER). All subunits are required for a maximal enzyme activity. This subunit contains the active site and the acceptor peptide and donor lipid-linked oligosaccharide (LLO) binding pockets. The chain is Dolichyl-diphosphooligosaccharide--protein glycosyltransferase subunit STT3B (STT3B) from Oryza sativa subsp. japonica (Rice).